A 380-amino-acid polypeptide reads, in one-letter code: MDSPIQIFRGEPGPTCAPSACLPPNSSAWFPGWAEPDSNGSAGSEDAQLEPAHISPAIPVIITAVYSVVFVVGLVGNSLVMFVIIRYTKMKTATNIYIFNLALADALVTTTMPFQSTVYLMNSWPFGDVLCKIVISIDYYNMFTSIFTLTMMSVDRYIAVCHPVKALDFRTPLKAKIINICIWLLSSSVGISAIVLGGTKVREDVDVIECSLQFPDDDYSWWDLFMKICVFIFAFVIPVLIIIVCYTLMILRLKSVRLLSGSREKDRNLRRITRLVLVVVAVFVVCWTPIHIFILVEALGSTSHSTAALSSYYFCIALGYTNSSLNPILYAFLDENFKRCFRDFCFPLKMRMERQSTSRVRNTVQDPAYLRDIDGMNKPV.

At 1 to 57 (MDSPIQIFRGEPGPTCAPSACLPPNSSAWFPGWAEPDSNGSAGSEDAQLEPAHISPA) the chain is on the extracellular side. N-linked (GlcNAc...) asparagine glycans are attached at residues asparagine 25 and asparagine 39. A helical membrane pass occupies residues 58 to 85 (IPVIITAVYSVVFVVGLVGNSLVMFVII). The Cytoplasmic segment spans residues 86 to 95 (RYTKMKTATN). Residues 96–119 (IYIFNLALADALVTTTMPFQSTVY) traverse the membrane as a helical segment. Residues 120–132 (LMNSWPFGDVLCK) are Extracellular-facing. Residues cysteine 131 and cysteine 210 are joined by a disulfide bond. A helical membrane pass occupies residues 133-154 (IVISIDYYNMFTSIFTLTMMSV). The Cytoplasmic segment spans residues 155-173 (DRYIAVCHPVKALDFRTPL). A helical transmembrane segment spans residues 174–196 (KAKIINICIWLLSSSVGISAIVL). Residues 197–222 (GGTKVREDVDVIECSLQFPDDDYSWW) lie on the Extracellular side of the membrane. The helical transmembrane segment at 223–247 (DLFMKICVFIFAFVIPVLIIIVCYT) threads the bilayer. Topologically, residues 248 to 274 (LMILRLKSVRLLSGSREKDRNLRRITR) are cytoplasmic. Residues 275 to 296 (LVLVVVAVFVVCWTPIHIFILV) traverse the membrane as a helical segment. The Extracellular portion of the chain corresponds to 297 to 311 (EALGSTSHSTAALSS). The helical transmembrane segment at 312–333 (YYFCIALGYTNSSLNPILYAFL) threads the bilayer. Residues 334 to 380 (DENFKRCFRDFCFPLKMRMERQSTSRVRNTVQDPAYLRDIDGMNKPV) lie on the Cytoplasmic side of the membrane. The S-palmitoyl cysteine moiety is linked to residue cysteine 345.

The protein belongs to the G-protein coupled receptor 1 family. Interacts with NHERF1. Interacts with GABARAPL1. In terms of tissue distribution, detected in brain and placenta.

It localises to the cell membrane. Functionally, G-protein coupled opioid receptor that functions as a receptor for endogenous alpha-neoendorphins and dynorphins, but has low affinity for beta-endorphins. Also functions as a receptor for various synthetic opioids and for the psychoactive diterpene salvinorin A. Ligand binding causes a conformation change that triggers signaling via guanine nucleotide-binding proteins (G proteins) and modulates the activity of down-stream effectors, such as adenylate cyclase. Signaling leads to the inhibition of adenylate cyclase activity. Inhibits neurotransmitter release by reducing calcium ion currents and increasing potassium ion conductance. Plays a role in the perception of pain. Plays a role in mediating reduced physical activity upon treatment with synthetic opioids. Plays a role in the regulation of salivation in response to synthetic opioids. May play a role in arousal and regulation of autonomic and neuroendocrine functions. In Homo sapiens (Human), this protein is Kappa-type opioid receptor (OPRK1).